We begin with the raw amino-acid sequence, 432 residues long: Phosphomethylpyrimidine synthase (432 aa).

Substrate contacts are provided by residues N66, M95, Y124, H163, S185–G187, D226–R229, and E265. H269 contributes to the Zn(2+) binding site. Position 292 (Y292) interacts with substrate. Residue H333 participates in Zn(2+) binding. 3 residues coordinate [4Fe-4S] cluster: C409, C412, and C416.

Belongs to the ThiC family. [4Fe-4S] cluster serves as cofactor.

The catalysed reaction is 5-amino-1-(5-phospho-beta-D-ribosyl)imidazole + S-adenosyl-L-methionine = 4-amino-2-methyl-5-(phosphooxymethyl)pyrimidine + CO + 5'-deoxyadenosine + formate + L-methionine + 3 H(+). It functions in the pathway cofactor biosynthesis; thiamine diphosphate biosynthesis. In terms of biological role, catalyzes the synthesis of the hydroxymethylpyrimidine phosphate (HMP-P) moiety of thiamine from aminoimidazole ribotide (AIR) in a radical S-adenosyl-L-methionine (SAM)-dependent reaction. The polypeptide is Phosphomethylpyrimidine synthase (Desulfitobacterium hafniense (strain DSM 10664 / DCB-2)).